The chain runs to 389 residues: Protein OSCP1 (389 aa).

Expressed predominantly in testis, also found in placenta and to a lesser extent in thymus and small intestine; abundantly expressed in tumor-derived cell lines. Ubiquitously expressed.

The protein resides in the basal cell membrane. Functionally, may be involved in drug clearance in the placenta. The protein is Protein OSCP1 (OSCP1) of Homo sapiens (Human).